The following is a 210-amino-acid chain: GEM-like protein 7 (210 aa).

The GRAM domain occupies 88–166 (KIYKRLFKVC…CKINGVNQSQ (79 aa)).

The protein belongs to the GEM family.

The protein is GEM-like protein 7 of Arabidopsis thaliana (Mouse-ear cress).